A 484-amino-acid polypeptide reads, in one-letter code: ATP synthase subunit beta (484 aa).

169-176 (GGAGVGKT) contacts ATP.

It belongs to the ATPase alpha/beta chains family. In terms of assembly, F-type ATPases have 2 components, CF(1) - the catalytic core - and CF(0) - the membrane proton channel. CF(1) has five subunits: alpha(3), beta(3), gamma(1), delta(1), epsilon(1). CF(0) has three main subunits: a(1), b(2) and c(9-12). The alpha and beta chains form an alternating ring which encloses part of the gamma chain. CF(1) is attached to CF(0) by a central stalk formed by the gamma and epsilon chains, while a peripheral stalk is formed by the delta and b chains.

The protein resides in the cell membrane. It carries out the reaction ATP + H2O + 4 H(+)(in) = ADP + phosphate + 5 H(+)(out). Functionally, produces ATP from ADP in the presence of a proton gradient across the membrane. The catalytic sites are hosted primarily by the beta subunits. The polypeptide is ATP synthase subunit beta (Cutibacterium acnes (strain DSM 16379 / KPA171202) (Propionibacterium acnes)).